Reading from the N-terminus, the 111-residue chain is Ribosome-binding factor A (111 aa).

Belongs to the RbfA family. In terms of assembly, monomer. Binds 30S ribosomal subunits, but not 50S ribosomal subunits or 70S ribosomes.

It localises to the cytoplasm. In terms of biological role, one of several proteins that assist in the late maturation steps of the functional core of the 30S ribosomal subunit. Associates with free 30S ribosomal subunits (but not with 30S subunits that are part of 70S ribosomes or polysomes). Required for efficient processing of 16S rRNA. May interact with the 5'-terminal helix region of 16S rRNA. The sequence is that of Ribosome-binding factor A from Helicobacter pylori (strain P12).